The sequence spans 438 residues: Chromosomal replication initiator protein DnaA (438 aa).

Residues Met1–Val74 form a domain I, interacts with DnaA modulators region. The interval Val74–Gly100 is domain II. The tract at residues Asn101–Thr317 is domain III, AAA+ region. ATP-binding residues include Gly145, Gly147, Lys148, and Thr149. The segment at Ser318–Gln438 is domain IV, binds dsDNA.

It belongs to the DnaA family. As to quaternary structure, oligomerizes as a right-handed, spiral filament on DNA at oriC.

It localises to the cytoplasm. In terms of biological role, plays an essential role in the initiation and regulation of chromosomal replication. ATP-DnaA binds to the origin of replication (oriC) to initiate formation of the DNA replication initiation complex once per cell cycle. Binds the DnaA box (a 9 base pair repeat at the origin) and separates the double-stranded (ds)DNA. Forms a right-handed helical filament on oriC DNA; dsDNA binds to the exterior of the filament while single-stranded (ss)DNA is stabiized in the filament's interior. The ATP-DnaA-oriC complex binds and stabilizes one strand of the AT-rich DNA unwinding element (DUE), permitting loading of DNA polymerase. After initiation quickly degrades to an ADP-DnaA complex that is not apt for DNA replication. Binds acidic phospholipids. The protein is Chromosomal replication initiator protein DnaA of Thermodesulfovibrio yellowstonii (strain ATCC 51303 / DSM 11347 / YP87).